The following is a 386-amino-acid chain: Ribosomal RNA small subunit methyltransferase H (386 aa).

Residues G97–H99, D116, Y143, D167, and Q174 contribute to the S-adenosyl-L-methionine site.

It belongs to the methyltransferase superfamily. RsmH family.

Its subcellular location is the cytoplasm. It catalyses the reaction cytidine(1402) in 16S rRNA + S-adenosyl-L-methionine = N(4)-methylcytidine(1402) in 16S rRNA + S-adenosyl-L-homocysteine + H(+). Functionally, specifically methylates the N4 position of cytidine in position 1402 (C1402) of 16S rRNA. This is Ribosomal RNA small subunit methyltransferase H from Mycolicibacterium paratuberculosis (strain ATCC BAA-968 / K-10) (Mycobacterium paratuberculosis).